We begin with the raw amino-acid sequence, 204 residues long: High frequency lysogenization protein HflD homolog (204 aa).

The protein belongs to the HflD family.

It is found in the cytoplasm. Its subcellular location is the cell inner membrane. The sequence is that of High frequency lysogenization protein HflD homolog from Xanthomonas axonopodis pv. citri (strain 306).